The sequence spans 219 residues: MSPQDKLVIALPKGRILDEAMPLVRAAGILPEPAFDDPKSRLLRFGTNHPHIDIIRVRSFDVATFVAFGAAHLGVAGNDVLMEFDYPEIYAPLDLGIGACRLSVAEPDDLAASDDPRRWSHVRIATKYPEVTKRHFAARGVQAECVKLNGAMELAPSLGLCTRIVDLVSSGATLKANGLKEVEVLAEVTSRLIVNRAALKTRPDEMAGWIEAFRKACGG.

Belongs to the ATP phosphoribosyltransferase family. Short subfamily. As to quaternary structure, heteromultimer composed of HisG and HisZ subunits.

It is found in the cytoplasm. The enzyme catalyses 1-(5-phospho-beta-D-ribosyl)-ATP + diphosphate = 5-phospho-alpha-D-ribose 1-diphosphate + ATP. It functions in the pathway amino-acid biosynthesis; L-histidine biosynthesis; L-histidine from 5-phospho-alpha-D-ribose 1-diphosphate: step 1/9. Functionally, catalyzes the condensation of ATP and 5-phosphoribose 1-diphosphate to form N'-(5'-phosphoribosyl)-ATP (PR-ATP). Has a crucial role in the pathway because the rate of histidine biosynthesis seems to be controlled primarily by regulation of HisG enzymatic activity. The sequence is that of ATP phosphoribosyltransferase from Paramagnetospirillum magneticum (strain ATCC 700264 / AMB-1) (Magnetospirillum magneticum).